The primary structure comprises 531 residues: Multidrug resistance protein fnx1 (531 aa).

Over 1–30 (MVDQVNLATEQTSLLYPEVSRKKEELSVNK) the chain is Cytoplasmic. Residues 31–51 (WTILPALWVGGFLSALDMTIV) form a helical membrane-spanning segment. Topologically, residues 52 to 225 (ASLYPVIGSE…NASLLSRIDY (174 aa)) are lumenal. Residues 226 to 246 (LGSFLLVTGITALVVTFNMGG) form a helical membrane-spanning segment. Over 247 to 252 (DAFPWV) the chain is Cytoplasmic. The helical transmembrane segment at 253–273 (SPVIITLLVSSVLILFAFYWV) threads the bilayer. Over 274–297 (EKNIAVEPIAPVEILSQPTPLNVC) the chain is Lumenal. A helical membrane pass occupies residues 298 to 318 (LGNFFNAFCSFVIVYELPLFF). Topologically, residues 319-360 (ETTLLMPSSEAGVRIFPYVISTSVGSLCSGLYMKKTGRYRNL) are cytoplasmic. The helical transmembrane segment at 361–381 (VIAGFFFMLMGIVSFAVLTSF) threads the bilayer. Residues 382-385 (GHRT) lie on the Lumenal side of the membrane. A helical transmembrane segment spans residues 386-406 (PLILISLCLAMTGCSYGMNLT). Over 407 to 496 (STLIAIISSL…QKLVIKSYAT (90 aa)) the chain is Cytoplasmic. The chain crosses the membrane as a helical span at residues 497–517 (AFTWTFALVAIIAFAGFWCSL). Residues 518–531 (RIKQFYLHTSVDRS) lie on the Lumenal side of the membrane.

This sequence belongs to the major facilitator superfamily.

Its subcellular location is the vacuole membrane. Its function is as follows. Efflux transporter. Confers resistance to a variety of toxic compounds. The chain is Multidrug resistance protein fnx1 (fnx1) from Schizosaccharomyces pombe (strain 972 / ATCC 24843) (Fission yeast).